The following is a 237-amino-acid chain: tRNA(His) guanylyltransferase (237 aa).

Residues aspartate 29, glycine 30, and aspartate 77 each coordinate Mg(2+). GTP contacts are provided by residues 29-34 and 76-77; these read DGKKFH and SD.

It belongs to the tRNA(His) guanylyltransferase family. Mg(2+) is required as a cofactor.

It carries out the reaction a 5'-end ribonucleotide-tRNA(His) + GTP + ATP + H2O = a 5'-end phospho-guanosine-ribonucleotide-tRNA(His) + AMP + 2 diphosphate + H(+). In terms of biological role, adds a GMP to the 5'-end of tRNA(His) after transcription and RNase P cleavage. The chain is tRNA(His) guanylyltransferase (THG1) from Kluyveromyces lactis (strain ATCC 8585 / CBS 2359 / DSM 70799 / NBRC 1267 / NRRL Y-1140 / WM37) (Yeast).